A 248-amino-acid chain; its full sequence is Probable transcriptional regulatory protein Msil_2305 (248 aa).

It belongs to the TACO1 family.

It is found in the cytoplasm. This chain is Probable transcriptional regulatory protein Msil_2305, found in Methylocella silvestris (strain DSM 15510 / CIP 108128 / LMG 27833 / NCIMB 13906 / BL2).